The sequence spans 327 residues: Tumor necrosis factor receptor superfamily member 6 (327 aa).

Residues 1–21 (MLWIWAVLPLVLAGSQLRVHT) form the signal peptide. Residues 22–169 (QGTNSISESL…NCRKQSPRNR (148 aa)) are Extracellular-facing. An N-linked (GlcNAc...) asparagine glycan is attached at N43. 3 TNFR-Cys repeats span residues 43–79 (NCSE…PTCA), 80–123 (PCTE…NTKC), and 124–162 (KCKP…TNCR). Intrachain disulfides connect C44/C55, C56/C69, C59/C78, C81/C97, C100/C115, C103/C123, C125/C139, C142/C153, and C145/C161. N114 carries N-linked (GlcNAc...) asparagine glycosylation. The helical transmembrane segment at 170–186 (LWLLTILVLLIPLVFIY) threads the bilayer. The Cytoplasmic portion of the chain corresponds to 187–327 (RKYRKRKCWK…GNENEGQCLE (141 aa)). C194 carries the S-palmitoyl cysteine lipid modification. Positions 204-309 (SRTSSRETIP…DKFQDMVQKD (106 aa)) are interaction with HIPK3. T206 is subject to Phosphothreonine. Residues S217 and S220 each carry the phosphoserine modification. An interaction with CALM region spans residues 222 to 246 (SKYIPRIAEDMTIQEAKKFARENNI). The Death domain maps to 222–306 (SKYIPRIAED…RTLDKFQDMV (85 aa)). Positions 308–327 (KDLGKSTPDTGNENEGQCLE) are disordered. At T314 the chain carries Phosphothreonine. The span at 314-327 (TPDTGNENEGQCLE) shows a compositional bias: polar residues.

As to quaternary structure, component of the death-induced signaling complex (DISC) composed of cell surface receptor FAS/CD95, adapter protein FADD and the CASP8 protease; recruitment of CASP8 to the complex is required for processing of CASP8 into the p18 and p10 subunits. Interacts directly (via DED domain) with NOL3 (via CARD domain); inhibits death-inducing signaling complex (DISC) assembly by inhibiting the increase in FAS-FADD binding induced by FAS activation. Binds DAXX. Interacts with HIPK3. Part of a complex containing HIPK3 and FADD. Binds RIPK1 and FAIM2. Interacts with BABAM2 and FEM1B. Interacts with CALM. In the absence of stimulation, interacts with BIRC2, DDX3X and GSK3B. The interaction with BIRC2 and DDX3X is further enhanced upon receptor stimulation and accompanied by DDX3X and BIRC2 cleavage. Palmitoylated. Palmitoylation by ZDHHC7 prevents the lysosomal degradation of FAS regulating its expression at the plasma membrane. Detected in various tissues including thymus, liver, lung, heart, and adult ovary.

Its subcellular location is the cell membrane. The protein localises to the membrane raft. In terms of biological role, receptor for TNFSF6/FASLG. The adapter molecule FADD recruits caspase CASP8 to the activated receptor. The resulting death-inducing signaling complex (DISC) performs CASP8 proteolytic activation which initiates the subsequent cascade of caspases (aspartate-specific cysteine proteases) mediating apoptosis. FAS-mediated apoptosis may have a role in the induction of peripheral tolerance, in the antigen-stimulated suicide of mature T-cells, or both. The polypeptide is Tumor necrosis factor receptor superfamily member 6 (Fas) (Mus musculus (Mouse)).